Reading from the N-terminus, the 328-residue chain is DNA-directed RNA polymerase subunit alpha (328 aa).

Residues 1–234 (MQNSPTEYLK…GQLSVFADLE (234 aa)) form an alpha N-terminal domain (alpha-NTD) region. The tract at residues 248-328 (VDPILLRPVD…NWPPAGLEKV (81 aa)) is alpha C-terminal domain (alpha-CTD).

This sequence belongs to the RNA polymerase alpha chain family. Homodimer. The RNAP catalytic core consists of 2 alpha, 1 beta, 1 beta' and 1 omega subunit. When a sigma factor is associated with the core the holoenzyme is formed, which can initiate transcription.

It catalyses the reaction RNA(n) + a ribonucleoside 5'-triphosphate = RNA(n+1) + diphosphate. Functionally, DNA-dependent RNA polymerase catalyzes the transcription of DNA into RNA using the four ribonucleoside triphosphates as substrates. This chain is DNA-directed RNA polymerase subunit alpha, found in Methylobacillus flagellatus (strain ATCC 51484 / DSM 6875 / VKM B-1610 / KT).